The primary structure comprises 363 residues: S-adenosylmethionine:tRNA ribosyltransferase-isomerase (363 aa).

Belongs to the QueA family. In terms of assembly, monomer.

It localises to the cytoplasm. It catalyses the reaction 7-aminomethyl-7-carbaguanosine(34) in tRNA + S-adenosyl-L-methionine = epoxyqueuosine(34) in tRNA + adenine + L-methionine + 2 H(+). The protein operates within tRNA modification; tRNA-queuosine biosynthesis. Its function is as follows. Transfers and isomerizes the ribose moiety from AdoMet to the 7-aminomethyl group of 7-deazaguanine (preQ1-tRNA) to give epoxyqueuosine (oQ-tRNA). The protein is S-adenosylmethionine:tRNA ribosyltransferase-isomerase of Magnetococcus marinus (strain ATCC BAA-1437 / JCM 17883 / MC-1).